The primary structure comprises 349 residues: Autophagy-related protein 3 (349 aa).

Residues 95–173 (ALVNDGDDFK…IRDSGADSKN (79 aa)) form a flexible region region. Cys244 (glycyl thioester intermediate) is an active-site residue. The interval 248–325 (SVMKTLLDRA…DQEVAIRVDQ (78 aa)) is handle region. Positions 306-309 (WEEV) match the ATG8 interaction motif (AIM) motif.

The protein belongs to the ATG3 family. In terms of assembly, monomer. Interacts with ATG8 through an intermediate thioester bond between Cys-244 and the C-terminal Gly of ATG8. Interacts with the C-terminal region of the E1-like ATG7 enzyme. Also interacts with the ATG12-ATG5 conjugate.

Its subcellular location is the cytoplasm. In terms of biological role, E2 conjugating enzyme required for the cytoplasm to vacuole transport (Cvt) and autophagy. Required for selective autophagic degradation of the nucleus (nucleophagy) as well as for mitophagy which contributes to regulate mitochondrial quantity and quality by eliminating the mitochondria to a basal level to fulfill cellular energy requirements and preventing excess ROS production. Responsible for the E2-like covalent binding of phosphatidylethanolamine to the C-terminal Gly of ATG8. The ATG12-ATG5 conjugate plays a role of an E3 and promotes the transfer of ATG8 from ATG3 to phosphatidylethanolamine (PE). This step is required for the membrane association of ATG8. The formation of the ATG8-phosphatidylethanolamine conjugate is essential for autophagy and for the cytoplasm to vacuole transport (Cvt). The ATG8-PE conjugate mediates tethering between adjacent membranes and stimulates membrane hemifusion, leading to expansion of the autophagosomal membrane during autophagy. Autophagy is required for proper vegetative growth, asexual/sexual reproduction, and full virulence. Autophagy is particularly involved in the biosynthesis of deoxynivalenol (DON), an important virulence determinant. This is Autophagy-related protein 3 from Gibberella zeae (strain ATCC MYA-4620 / CBS 123657 / FGSC 9075 / NRRL 31084 / PH-1) (Wheat head blight fungus).